A 227-amino-acid polypeptide reads, in one-letter code: Cytochrome c oxidase subunit 2 (227 aa).

Residues 1 to 14 (MAYPFQLGLQDATS) are Mitochondrial intermembrane-facing. A helical membrane pass occupies residues 15–45 (PIMEELTNFHDHTLMIVFLISTLVLYIISLM). At 46 to 59 (LTTKLTHTSTMDAQ) the chain is on the mitochondrial matrix side. Residues 60 to 87 (EVETIWTILPAVILILIALPSLRILYMM) form a helical membrane-spanning segment. Residues 88–227 (DEINNPVLTV…YFENWSASMI (140 aa)) lie on the Mitochondrial intermembrane side of the membrane. His-161, Cys-196, Glu-198, Cys-200, His-204, and Met-207 together coordinate Cu cation. Glu-198 is a Mg(2+) binding site. Residue Tyr-218 is modified to Phosphotyrosine.

Belongs to the cytochrome c oxidase subunit 2 family. In terms of assembly, component of the cytochrome c oxidase (complex IV, CIV), a multisubunit enzyme composed of 14 subunits. The complex is composed of a catalytic core of 3 subunits MT-CO1, MT-CO2 and MT-CO3, encoded in the mitochondrial DNA, and 11 supernumerary subunits COX4I, COX5A, COX5B, COX6A, COX6B, COX6C, COX7A, COX7B, COX7C, COX8 and NDUFA4, which are encoded in the nuclear genome. The complex exists as a monomer or a dimer and forms supercomplexes (SCs) in the inner mitochondrial membrane with NADH-ubiquinone oxidoreductase (complex I, CI) and ubiquinol-cytochrome c oxidoreductase (cytochrome b-c1 complex, complex III, CIII), resulting in different assemblies (supercomplex SCI(1)III(2)IV(1) and megacomplex MCI(2)III(2)IV(2)). Found in a complex with TMEM177, COA6, COX18, COX20, SCO1 and SCO2. Interacts with TMEM177 in a COX20-dependent manner. Interacts with COX20. Interacts with COX16. Cu cation is required as a cofactor.

The protein localises to the mitochondrion inner membrane. It carries out the reaction 4 Fe(II)-[cytochrome c] + O2 + 8 H(+)(in) = 4 Fe(III)-[cytochrome c] + 2 H2O + 4 H(+)(out). Its function is as follows. Component of the cytochrome c oxidase, the last enzyme in the mitochondrial electron transport chain which drives oxidative phosphorylation. The respiratory chain contains 3 multisubunit complexes succinate dehydrogenase (complex II, CII), ubiquinol-cytochrome c oxidoreductase (cytochrome b-c1 complex, complex III, CIII) and cytochrome c oxidase (complex IV, CIV), that cooperate to transfer electrons derived from NADH and succinate to molecular oxygen, creating an electrochemical gradient over the inner membrane that drives transmembrane transport and the ATP synthase. Cytochrome c oxidase is the component of the respiratory chain that catalyzes the reduction of oxygen to water. Electrons originating from reduced cytochrome c in the intermembrane space (IMS) are transferred via the dinuclear copper A center (CU(A)) of subunit 2 and heme A of subunit 1 to the active site in subunit 1, a binuclear center (BNC) formed by heme A3 and copper B (CU(B)). The BNC reduces molecular oxygen to 2 water molecules using 4 electrons from cytochrome c in the IMS and 4 protons from the mitochondrial matrix. This Leopoldamys sabanus (Long-tailed giant rat) protein is Cytochrome c oxidase subunit 2 (MT-CO2).